The chain runs to 828 residues: Glycerol-3-phosphate acyltransferase (828 aa).

The HXXXXD motif motif lies at 309–314 (CHRSHI).

This sequence belongs to the GPAT/DAPAT family.

The protein resides in the cell inner membrane. It carries out the reaction sn-glycerol 3-phosphate + an acyl-CoA = a 1-acyl-sn-glycero-3-phosphate + CoA. The protein operates within phospholipid metabolism; CDP-diacylglycerol biosynthesis; CDP-diacylglycerol from sn-glycerol 3-phosphate: step 1/3. The polypeptide is Glycerol-3-phosphate acyltransferase (Pseudomonas putida (strain GB-1)).